The chain runs to 122 residues: Small ribosomal subunit protein uS13 (122 aa).

The segment at 92–122 is disordered; it reads HRNGLPVRGQRTHTNARTRKGKAKPIAGKKK. Residues 101–122 show a composition bias toward basic residues; it reads QRTHTNARTRKGKAKPIAGKKK.

This sequence belongs to the universal ribosomal protein uS13 family. Part of the 30S ribosomal subunit. Forms a loose heterodimer with protein S19. Forms two bridges to the 50S subunit in the 70S ribosome.

Its function is as follows. Located at the top of the head of the 30S subunit, it contacts several helices of the 16S rRNA. In the 70S ribosome it contacts the 23S rRNA (bridge B1a) and protein L5 of the 50S subunit (bridge B1b), connecting the 2 subunits; these bridges are implicated in subunit movement. Contacts the tRNAs in the A and P-sites. This chain is Small ribosomal subunit protein uS13, found in Erythrobacter litoralis (strain HTCC2594).